We begin with the raw amino-acid sequence, 1150 residues long: RNA polymerase-associated protein CTR9 (1150 aa).

TPR repeat units follow at residues 143–176 (VRAWFYLFERDKSTNKYELADQQFNYVVKTNPKN), 177–210 (VLPLIGKAVIAFNKKDYKTAIYYFRKAIRQCRHT), 212–245 (ADLRVGIGHCFAKMGMMDKAKTAFERAMEIEPYN), 247–282 (SAMCGLGIILLNTYDHDSLKHAVSLFGRSYNLQTDH), 320–353 (AEAFYQMGRCRHAQGQFDGAYKYYYQARQANNGE), 355–388 (TLAHYGLGQMYIHRNEIEEAIKCFDTVHKRLPNN), 432–464 (YEACIDLAQLLEATDPKRSLELYENAIDLLVTN), 471–504 (PEMLNNVGALYMSMKQYEKAEHHFKRAKERLEEQ), 594–627 (PIVWTLIGNLHFAKNEWMPAQKKFEFILSKIFNN), 643–677 (FEQLLNPSRKKEDEKKYIDRALQMYQKALKLQPKN), 679–711 (YAANGIGCVLAYKRNWNDARDVFSQVRESTSEF), 712–745 (YDVWLNIAHVCMEREQWMAAVQMYSSAMKKFRKE), and 748–781 (STLQHYLAKAYYRANMLNEAKEALECAMLDQLDN). Coiled-coil stretches lie at residues 848–916 (AEEA…NLRL) and 972–1028 (ERRE…AKQS). The interval 935–1150 (KRRGGGGRKR…KKKVIESDSD (216 aa)) is disordered. The segment covering 975–992 (ERRKKDKAAKKASRKKRE) has biased composition (basic residues). Basic and acidic residues-rich tracts occupy residues 993–1005 (RRDSGGPDSNRRD), 1013–1024 (EERDRKLQEKLS), 1060–1084 (DPRPPVDEFDSPTRTDSDSDRETTT), and 1132–1150 (RDSDGSDAPKKKVIESDSD).

As to quaternary structure, component of the PAF1 complex which consists of at least cdc-73, ctr-9, leo-1, pafo-1 and rtfo-1.

The protein resides in the nucleus. In terms of biological role, component of the PAF1 complex which is a multifunctional complex involved in transcription initiation via genetic interactions with TATA-binding proteins, elongation and transcription-coupled histone modification. Ctr-9 is required for epidermal microtubule organization during morphogenesis. In Caenorhabditis elegans, this protein is RNA polymerase-associated protein CTR9.